The chain runs to 358 residues: Trans-anol O-methyltransferase 1 (358 aa).

S-adenosyl-L-methionine is bound by residues Gly201, Asp224, Asp244, Met245, and Arg259. The active-site Proton acceptor is the His262.

This sequence belongs to the class I-like SAM-binding methyltransferase superfamily. Cation-independent O-methyltransferase family. COMT subfamily. Highly expressed in developing fruits. Expressed at low levels in roots, young leaves, buds and flowers.

The catalysed reaction is (E)-anol + S-adenosyl-L-methionine = (E)-anethole + S-adenosyl-L-homocysteine + H(+). The enzyme catalyses (E)-isoeugenol + S-adenosyl-L-methionine = (E)-isomethyleugenol + S-adenosyl-L-homocysteine + H(+). The protein operates within aromatic compound metabolism; phenylpropanoid biosynthesis. Inhibited by zinc and copper. In terms of biological role, phenylpropene O-methyltransferase that catalyzes the conversion of trans-anol to trans-anethole and isoeugenol to isomethyleugenol. Phenylpropenes are the primary constituents of various essential plant oils. They are produced as antimicrobial and antianimal compounds, or as floral attractants of pollinators. The sequence is that of Trans-anol O-methyltransferase 1 (AIMT1) from Pimpinella anisum (Anise).